The chain runs to 282 residues: 3-methyl-2-oxobutanoate hydroxymethyltransferase (282 aa).

2 residues coordinate Mg(2+): D63 and D102. 3-methyl-2-oxobutanoate contacts are provided by residues 63-64, D102, and K132; that span reads DS. Mg(2+) is bound at residue E134. The active-site Proton acceptor is the E200.

Belongs to the PanB family. Homodecamer; pentamer of dimers. Mg(2+) serves as cofactor.

The protein localises to the cytoplasm. It carries out the reaction 3-methyl-2-oxobutanoate + (6R)-5,10-methylene-5,6,7,8-tetrahydrofolate + H2O = 2-dehydropantoate + (6S)-5,6,7,8-tetrahydrofolate. Its pathway is cofactor biosynthesis; (R)-pantothenate biosynthesis; (R)-pantoate from 3-methyl-2-oxobutanoate: step 1/2. Functionally, catalyzes the reversible reaction in which hydroxymethyl group from 5,10-methylenetetrahydrofolate is transferred onto alpha-ketoisovalerate to form ketopantoate. This is 3-methyl-2-oxobutanoate hydroxymethyltransferase from Mycobacterium sp. (strain JLS).